Here is a 244-residue protein sequence, read N- to C-terminus: Putative B3 domain-containing protein At2g31460 (244 aa).

The segment at residues Ser49 to Gly147 is a DNA-binding region (TF-B3). Disordered regions lie at residues Asp175–Val196 and Asp217–Gln244. The span at Gly235–Gln244 shows a compositional bias: basic and acidic residues.

It is found in the nucleus. The sequence is that of Putative B3 domain-containing protein At2g31460 from Arabidopsis thaliana (Mouse-ear cress).